The primary structure comprises 315 residues: Aspartate carbamoyltransferase catalytic subunit (315 aa).

Carbamoyl phosphate-binding residues include Arg-64 and Thr-65. Residue Lys-92 coordinates L-aspartate. Residues Arg-114, His-142, and Gln-145 each contribute to the carbamoyl phosphate site. 2 residues coordinate L-aspartate: Arg-175 and Arg-229. Gly-270 and Pro-271 together coordinate carbamoyl phosphate.

The protein belongs to the aspartate/ornithine carbamoyltransferase superfamily. ATCase family. As to quaternary structure, heterododecamer (2C3:3R2) of six catalytic PyrB chains organized as two trimers (C3), and six regulatory PyrI chains organized as three dimers (R2).

It carries out the reaction carbamoyl phosphate + L-aspartate = N-carbamoyl-L-aspartate + phosphate + H(+). It participates in pyrimidine metabolism; UMP biosynthesis via de novo pathway; (S)-dihydroorotate from bicarbonate: step 2/3. Catalyzes the condensation of carbamoyl phosphate and aspartate to form carbamoyl aspartate and inorganic phosphate, the committed step in the de novo pyrimidine nucleotide biosynthesis pathway. In Methylorubrum extorquens (strain CM4 / NCIMB 13688) (Methylobacterium extorquens), this protein is Aspartate carbamoyltransferase catalytic subunit.